We begin with the raw amino-acid sequence, 62 residues long: MFGIGIPELLVIFVLILLVFGAKRLPEIGGGLGRAIKNFKKATTEPDEIDVTPSSEKKHKDE.

Residues 1–21 traverse the membrane as a helical segment; sequence MFGIGIPELLVIFVLILLVFG.

Belongs to the TatA/E family. In terms of assembly, the Tat system comprises two distinct complexes: a TatABC complex, containing multiple copies of TatA, TatB and TatC subunits, and a separate TatA complex, containing only TatA subunits. Substrates initially bind to the TatABC complex, which probably triggers association of the separate TatA complex to form the active translocon.

The protein resides in the cell inner membrane. In terms of biological role, part of the twin-arginine translocation (Tat) system that transports large folded proteins containing a characteristic twin-arginine motif in their signal peptide across membranes. TatA could form the protein-conducting channel of the Tat system. In Oleidesulfovibrio alaskensis (strain ATCC BAA-1058 / DSM 17464 / G20) (Desulfovibrio alaskensis), this protein is Sec-independent protein translocase protein TatA.